Consider the following 88-residue polypeptide: Small ribosomal subunit protein bS18 (88 aa).

Low complexity predominate over residues M1 to N11. The interval M1 to A21 is disordered.

The protein belongs to the bacterial ribosomal protein bS18 family. Part of the 30S ribosomal subunit. Forms a tight heterodimer with protein bS6.

In terms of biological role, binds as a heterodimer with protein bS6 to the central domain of the 16S rRNA, where it helps stabilize the platform of the 30S subunit. The protein is Small ribosomal subunit protein bS18 of Thermoanaerobacter pseudethanolicus (strain ATCC 33223 / 39E) (Clostridium thermohydrosulfuricum).